The sequence spans 128 residues: Large ribosomal subunit protein bL12 (128 aa).

It belongs to the bacterial ribosomal protein bL12 family. In terms of assembly, homodimer. Part of the ribosomal stalk of the 50S ribosomal subunit. Forms a multimeric L10(L12)X complex, where L10 forms an elongated spine to which 2 to 4 L12 dimers bind in a sequential fashion. Binds GTP-bound translation factors.

In terms of biological role, forms part of the ribosomal stalk which helps the ribosome interact with GTP-bound translation factors. Is thus essential for accurate translation. The protein is Large ribosomal subunit protein bL12 of Phenylobacterium zucineum (strain HLK1).